The chain runs to 256 residues: Protein YIPF5 (256 aa).

Residues 1–125 lie on the Cytoplasmic side of the membrane; sequence MSNFDNFNTD…ADGSIMNETD (125 aa). The chain crosses the membrane as a helical span at residues 126–146; the sequence is LAGPMVFCLAFGATLLLAGKI. Residue Gln147 is a topological domain, lumenal. A helical transmembrane segment spans residues 148–168; it reads FGYVYGISAMGCLGMYCLLNL. Topologically, residues 169 to 172 are cytoplasmic; it reads MSMT. A helical transmembrane segment spans residues 173-193; sequence GVSFGCVSSVLGYCLLPMIIL. The Lumenal segment spans residues 194–195; sequence ST. Residues 196-216 form a helical membrane-spanning segment; sequence FAVIFSLQGILGIVLAALIIG. Residues 217–235 are Cytoplasmic-facing; sequence WCSFSASKIFISALAMDGQ. The chain crosses the membrane as a helical span at residues 236-256; sequence QLLVAYPCALLYGVFALISVF.

Belongs to the YIP1 family.

The protein resides in the endoplasmic reticulum membrane. It is found in the golgi apparatus. It localises to the cis-Golgi network membrane. Plays a role in transport between endoplasmic reticulum and Golgi. The polypeptide is Protein YIPF5 (yipf5) (Xenopus laevis (African clawed frog)).